Reading from the N-terminus, the 290-residue chain is MKPPEHSLIIISGLSGSGKSVALKTFEDLDYYCSDNLPVELLPHFLRCRLRVAELSDQRIAIGIDIRSGSNLSELDQWRHTAKHYNIKAHLLFFEASNETLLKRYADTRRRHPLSHLGLSLPEAIALERELTAPLREAAEAVIDTSTFNVHQLRRHVVTEFALTHSDKLSLLFESFAYKRGVPTEADFVFDARILPNPHWEPELRSLTGRDSNVRDYMEQQPDVILYLRQITEFLDTWLARLQADTRSYVTVAFGCTGGKHRSVYLAEQMARHAREKGWSEVATFHRELE.

Residue 13 to 20 (GLSGSGKS) coordinates ATP. A GTP-binding site is contributed by 65–68 (DIRS).

Belongs to the RapZ-like family.

Displays ATPase and GTPase activities. This is Nucleotide-binding protein XF_1405 from Xylella fastidiosa (strain 9a5c).